The sequence spans 263 residues: Palmitoyltransferase ZDHHC22 (263 aa).

Residues 1 to 9 (MLALRLLNV) are Cytoplasmic-facing. The helical transmembrane segment at 10-30 (VAPAYFLCISLVTFVLQLFLF) threads the bilayer. Over 31 to 48 (LPSMREDPAAARLFSPAL) the chain is Lumenal. Residues 49–69 (LHGALFLFLSANALGNYVLVI) traverse the membrane as a helical segment. Topologically, residues 70 to 125 (QNSPDDLGACQGASARKTPCPSPSTHFCRVCARVTLRHDHHCFFTGNCIGSRNMRN) are cytoplasmic. One can recognise a DHHC domain in the interval 92–131 (PSTHFCRVCARVTLRHDHHCFFTGNCIGSRNMRNFVLFCL). Catalysis depends on Cys111, which acts as the S-palmitoyl cysteine intermediate. A run of 2 helical transmembrane segments spans residues 126-146 (FVLFCLYTSLACLYSMVAGVA) and 147-167 (YISAVLSISFAHPLAFLTLLP). The Cytoplasmic portion of the chain corresponds to 168 to 182 (TSISQFFSGAVLGSE). The helical transmembrane segment at 183 to 203 (MFVILMLYLWFAIGLACAGFC) threads the bilayer. At 204 to 263 (CHQLLLILRGQTRHQVRKGVAVRARPWRKNLQEVFGKRWLLGLLVPMFNVGSESSKQQDK) the chain is on the lumenal side.

This sequence belongs to the DHHC palmitoyltransferase family. Interacts with CNN3. As to expression, widely expressed.

Its subcellular location is the endoplasmic reticulum membrane. It is found in the golgi apparatus membrane. It catalyses the reaction L-cysteinyl-[protein] + hexadecanoyl-CoA = S-hexadecanoyl-L-cysteinyl-[protein] + CoA. Functionally, palmitoyltransferase that could catalyze the addition of palmitate onto various protein substrates and be involved in a variety of cellular processes. Catalyzes the palmitoylation of KCNMA1, regulating localization of KCNMA1 to the plasma membrane. Might also mediate palmitoylation of CNN3. The polypeptide is Palmitoyltransferase ZDHHC22 (Homo sapiens (Human)).